Here is a 280-residue protein sequence, read N- to C-terminus: uncharacterized protein (280 aa).

CBS domains follow at residues 10–67 (QNKK…GSKY), 90–146 (MEEN…KIDE), 154–209 (ITRD…DWAF), and 229–280 (MKRD…KYFA).

This is an uncharacterized protein from Methanocaldococcus jannaschii (strain ATCC 43067 / DSM 2661 / JAL-1 / JCM 10045 / NBRC 100440) (Methanococcus jannaschii).